The primary structure comprises 156 residues: MNITVLAVGTKMPRWVDEAVAEYAKRFGRDVAYVLKEIKPEKRGAGVNAAQGMAAEEKRILEAIPQGAFLVVLDERGKAPTSVELAEHLKTWQQNGEHVCFVIGGADGMTDRLKQQARMMMRLSSLTLPHGMVRVLLTEQLYRAASILHNHPYHRE.

Residues leucine 73, glycine 104, and leucine 123 to leucine 128 contribute to the S-adenosyl-L-methionine site.

This sequence belongs to the RNA methyltransferase RlmH family. Homodimer.

Its subcellular location is the cytoplasm. It carries out the reaction pseudouridine(1915) in 23S rRNA + S-adenosyl-L-methionine = N(3)-methylpseudouridine(1915) in 23S rRNA + S-adenosyl-L-homocysteine + H(+). Its function is as follows. Specifically methylates the pseudouridine at position 1915 (m3Psi1915) in 23S rRNA. The sequence is that of Ribosomal RNA large subunit methyltransferase H from Neisseria meningitidis serogroup C / serotype 2a (strain ATCC 700532 / DSM 15464 / FAM18).